We begin with the raw amino-acid sequence, 452 residues long: Probable phosphoglucosamine mutase (452 aa).

S96 functions as the Phosphoserine intermediate in the catalytic mechanism. The Mg(2+) site is built by S96, D235, D237, and D239. S96 is subject to Phosphoserine.

The protein belongs to the phosphohexose mutase family. The cofactor is Mg(2+). In terms of processing, activated by phosphorylation.

The catalysed reaction is alpha-D-glucosamine 1-phosphate = D-glucosamine 6-phosphate. In terms of biological role, catalyzes the conversion of glucosamine-6-phosphate to glucosamine-1-phosphate. In Methanopyrus kandleri (strain AV19 / DSM 6324 / JCM 9639 / NBRC 100938), this protein is Probable phosphoglucosamine mutase.